The chain runs to 364 residues: Putative [LysW]-aminoadipate semialdehyde/glutamate semialdehyde transaminase (364 aa).

Pyridoxal 5'-phosphate is bound by residues 90-91 and phenylalanine 117; that span reads GT. Position 120 (arginine 120) interacts with substrate. 202 to 205 lines the pyridoxal 5'-phosphate pocket; that stretch reads DEVQ. Lysine 230 bears the N6-(pyridoxal phosphate)lysine mark. Residue serine 254 coordinates substrate. Threonine 255 contributes to the pyridoxal 5'-phosphate binding site.

Belongs to the class-III pyridoxal-phosphate-dependent aminotransferase family. LysJ subfamily. As to quaternary structure, homodimer. The cofactor is pyridoxal 5'-phosphate.

It localises to the cytoplasm. The enzyme catalyses [amino-group carrier protein]-C-terminal-gamma-(L-lysyl)-L-glutamate + 2-oxoglutarate = [amino-group carrier protein]-C-terminal-N-(1-carboxy-5-oxopentan-1-yl)-L-glutamine + L-glutamate. It catalyses the reaction [amino-group carrier protein]-C-terminal-gamma-(L-ornithyl)-L-glutamate + 2-oxoglutarate = [amino-group carrier protein]-C-terminal-gamma-(L-glutamyl-5-semialdehyde)-L-glutamate + L-glutamate. It functions in the pathway amino-acid biosynthesis; L-lysine biosynthesis via AAA pathway; L-lysine from L-alpha-aminoadipate (Thermus route): step 4/5. It participates in amino-acid biosynthesis; L-arginine biosynthesis. Its function is as follows. Involved in both the arginine and lysine biosynthetic pathways. In Pyrococcus abyssi (strain GE5 / Orsay), this protein is Putative [LysW]-aminoadipate semialdehyde/glutamate semialdehyde transaminase.